Here is a 317-residue protein sequence, read N- to C-terminus: Putative 12-oxophytodienoate reductase 10 (317 aa).

FMN is bound at residue 26–28 (PVG). 117 to 120 (HGAN) serves as a coordination point for substrate. Y122 (proton donor) is an active-site residue. R169 contacts FMN. Substrate is bound at residue R209. Residues G244 and 265-266 (GR) each bind FMN.

Belongs to the NADH:flavin oxidoreductase/NADH oxidase family. It depends on FMN as a cofactor.

In terms of biological role, putative oxophytodienoate reductase that may be involved in the biosynthesis or metabolism of oxylipin signaling molecules. The protein is Putative 12-oxophytodienoate reductase 10 (OPR10) of Oryza sativa subsp. japonica (Rice).